A 778-amino-acid chain; its full sequence is Endonuclease MutS2 (778 aa).

328–335 (GPNTGGKT) is a binding site for ATP. The Smr domain occupies 702–777 (LDLRGKRYEE…GSGATIVTFK (76 aa)).

Belongs to the DNA mismatch repair MutS family. MutS2 subfamily. Homodimer. Binds to stalled ribosomes, contacting rRNA.

Endonuclease that is involved in the suppression of homologous recombination and thus may have a key role in the control of bacterial genetic diversity. In terms of biological role, acts as a ribosome collision sensor, splitting the ribosome into its 2 subunits. Detects stalled/collided 70S ribosomes which it binds and splits by an ATP-hydrolysis driven conformational change. Acts upstream of the ribosome quality control system (RQC), a ribosome-associated complex that mediates the extraction of incompletely synthesized nascent chains from stalled ribosomes and their subsequent degradation. Probably generates substrates for RQC. This is Endonuclease MutS2 from Streptococcus pneumoniae (strain ATCC 700669 / Spain 23F-1).